The chain runs to 394 residues: Phenylalanine 4-monooxygenase, chloroplastic (394 aa).

Residues 1–79 (MAMEVGYLRH…LNQIQAVSTA (79 aa)) constitute a chloroplast transit peptide. Residues 75-97 (AVSTAEKEREADKTSTPPIPSSI) are disordered. Residues His-252, His-257, and Glu-297 each coordinate Fe cation.

This sequence belongs to the biopterin-dependent aromatic amino acid hydroxylase family. In terms of assembly, forms monomers. Fe(2+) is required as a cofactor.

The protein resides in the plastid. The protein localises to the chloroplast. The enzyme catalyses (6R)-L-erythro-5,6,7,8-tetrahydrobiopterin + L-phenylalanine + O2 = (4aS,6R)-4a-hydroxy-L-erythro-5,6,7,8-tetrahydrobiopterin + L-tyrosine. Catalyzes the hydroxylation of L-phenylalanine to L-tyrosine. Does not seem to be tetrahydropterin-dependent and shows preference for 10-formyltetrahydrofolate as cosubstrate and electron donor. This chain is Phenylalanine 4-monooxygenase, chloroplastic, found in Physcomitrium patens (Spreading-leaved earth moss).